A 260-amino-acid polypeptide reads, in one-letter code: MMMGFAVSDELLGTVAPIVVYWLYSGIYVALSSLESYRLHSKVEEEEKNLVSKSSVVKGVLVQQVVQAVVAILLFTVTGSDAEADKAQQFSFLVLARQFVTAMIVLDTWQYFMHRYMHQNKFLYKHIHSQHHRLIVPYAYGALYNHPVEGLLLDTIGGALSFLVSGMSPRTSIFFFSFATIKTVDDHCGLWLPGNLFHMVFKNNSAYHDIHHQLYGTKYNFSQPFFVMWDRILGTYMPYSLEKREDGGFEARPTKEFKDD.

3 consecutive transmembrane segments (helical) span residues 11 to 31, 55 to 75, and 92 to 112; these read LLGT…YVAL, SVVK…ILLF, and FLVL…WQYF. The region spanning 99-235 is the Fatty acid hydroxylase domain; that stretch reads FVTAMIVLDT…FVMWDRILGT (137 aa). Residues 114 to 118 carry the Histidine box-1 motif; sequence HRYMH. The Histidine box-2 signature appears at 128-132; sequence HSQHH. The Histidine box-3 motif lies at 207-213; the sequence is YHDIHHQ.

Belongs to the sterol desaturase family. The cofactor is Fe cation. As to expression, ubiquitous, with higher levels in flowers and roots.

The protein resides in the endoplasmic reticulum membrane. The enzyme catalyses a dihydroceramide + 2 Fe(II)-[cytochrome b5] + O2 + 2 H(+) = a phytoceramide + 2 Fe(III)-[cytochrome b5] + H2O. It participates in membrane lipid metabolism; sphingolipid biosynthesis. Functionally, involved in sphingolipid trihydroxy long-chain base (4-hydroxysphinganine) biosynthesis. Can use C18- and C20-sphinganine as substrates to produce C18- and C20-phytosphinganines (D-ribo-2-amino-1,3,4-trihydroxyoctadecane and -eicosane). The sequence is that of Sphinganine C4-monooxygenase 1 (SBH1) from Arabidopsis thaliana (Mouse-ear cress).